A 43-amino-acid polypeptide reads, in one-letter code: Protein PsbN (43 aa).

The helical transmembrane segment at 5-27 threads the bilayer; that stretch reads TLVAISISCLLVSFTGYALYTAF.

Belongs to the PsbN family.

The protein resides in the plastid. It localises to the chloroplast thylakoid membrane. May play a role in photosystem I and II biogenesis. The sequence is that of Protein PsbN from Cedrus deodara (Deodar cedar).